The primary structure comprises 705 residues: 1,4-alpha-glucan branching enzyme GlgB (705 aa).

The active-site Nucleophile is the aspartate 309. The Proton donor role is filled by glutamate 360. Positions 654–705 are disordered; sequence VQVERAADPRPNEQQRLVAETPAHEGGRSAPADAAESAEQKPDDEQKGGKKA. A compositionally biased stretch (basic and acidic residues) spans 691 to 705; it reads AEQKPDDEQKGGKKA.

This sequence belongs to the glycosyl hydrolase 13 family. GlgB subfamily. Monomer.

The catalysed reaction is Transfers a segment of a (1-&gt;4)-alpha-D-glucan chain to a primary hydroxy group in a similar glucan chain.. Its pathway is glycan biosynthesis; glycogen biosynthesis. Its function is as follows. Catalyzes the formation of the alpha-1,6-glucosidic linkages in glycogen by scission of a 1,4-alpha-linked oligosaccharide from growing alpha-1,4-glucan chains and the subsequent attachment of the oligosaccharide to the alpha-1,6 position. The polypeptide is 1,4-alpha-glucan branching enzyme GlgB (Deinococcus radiodurans (strain ATCC 13939 / DSM 20539 / JCM 16871 / CCUG 27074 / LMG 4051 / NBRC 15346 / NCIMB 9279 / VKM B-1422 / R1)).